We begin with the raw amino-acid sequence, 570 residues long: Urease subunit alpha (570 aa).

The region spanning 131-570 is the Urease domain; the sequence is GGFDAHIHFI…LPMAQRYFLF (440 aa). The Ni(2+) site is built by histidine 136, histidine 138, and lysine 219. Lysine 219 is subject to N6-carboxylysine. Position 221 (histidine 221) interacts with substrate. Positions 248 and 274 each coordinate Ni(2+). The active-site Proton donor is histidine 322. Aspartate 362 is a binding site for Ni(2+).

This sequence belongs to the metallo-dependent hydrolases superfamily. Urease alpha subunit family. In terms of assembly, heterotrimer of UreA (gamma), UreB (beta) and UreC (alpha) subunits. Three heterotrimers associate to form the active enzyme. Ni cation is required as a cofactor. Post-translationally, carboxylation allows a single lysine to coordinate two nickel ions.

The protein localises to the cytoplasm. It catalyses the reaction urea + 2 H2O + H(+) = hydrogencarbonate + 2 NH4(+). The protein operates within nitrogen metabolism; urea degradation; CO(2) and NH(3) from urea (urease route): step 1/1. The protein is Urease subunit alpha of Mesorhizobium japonicum (strain LMG 29417 / CECT 9101 / MAFF 303099) (Mesorhizobium loti (strain MAFF 303099)).